The sequence spans 505 residues: 2,3-bisphosphoglycerate-independent phosphoglycerate mutase (505 aa).

Asp-11 and Ser-61 together coordinate Mn(2+). The active-site Phosphoserine intermediate is Ser-61. Residues His-122, 152–153, Arg-183, Arg-189, 259–262, and Lys-332 contribute to the substrate site; these read RD and RTDR. Residues Asp-399, His-403, Asp-440, His-441, and His-458 each coordinate Mn(2+).

The protein belongs to the BPG-independent phosphoglycerate mutase family. As to quaternary structure, monomer. Mn(2+) is required as a cofactor.

The catalysed reaction is (2R)-2-phosphoglycerate = (2R)-3-phosphoglycerate. It participates in carbohydrate degradation; glycolysis; pyruvate from D-glyceraldehyde 3-phosphate: step 3/5. Its function is as follows. Catalyzes the interconversion of 2-phosphoglycerate and 3-phosphoglycerate. This chain is 2,3-bisphosphoglycerate-independent phosphoglycerate mutase, found in Flavobacterium johnsoniae (strain ATCC 17061 / DSM 2064 / JCM 8514 / BCRC 14874 / CCUG 350202 / NBRC 14942 / NCIMB 11054 / UW101) (Cytophaga johnsonae).